A 314-amino-acid chain; its full sequence is 2,3-dihydroxyphenylpropionate/2,3-dihydroxicinnamic acid 1,2-dioxygenase (314 aa).

Catalysis depends on histidine 115, which acts as the Proton donor. Catalysis depends on histidine 179, which acts as the Proton acceptor.

The protein belongs to the LigB/MhpB extradiol dioxygenase family. As to quaternary structure, homotetramer. Fe(2+) is required as a cofactor.

It catalyses the reaction 3-(2,3-dihydroxyphenyl)propanoate + O2 = (2Z,4E)-2-hydroxy-6-oxonona-2,4-dienedioate + H(+). It carries out the reaction (2E)-3-(2,3-dihydroxyphenyl)prop-2-enoate + O2 = (2Z,4E,7E)-2-hydroxy-6-oxonona-2,4,7-trienedioate + H(+). Its pathway is aromatic compound metabolism; 3-phenylpropanoate degradation. Its function is as follows. Catalyzes the non-heme iron(II)-dependent oxidative cleavage of 2,3-dihydroxyphenylpropionic acid and 2,3-dihydroxicinnamic acid into 2-hydroxy-6-ketononadienedioate and 2-hydroxy-6-ketononatrienedioate, respectively. This chain is 2,3-dihydroxyphenylpropionate/2,3-dihydroxicinnamic acid 1,2-dioxygenase, found in Klebsiella pneumoniae (strain 342).